The sequence spans 976 residues: Villin-2 (976 aa).

Gelsolin-like repeat units follow at residues F27–G77, I148–A188, G260–K302, G399–D450, N531–E571, and F633–Q674. The interval N769–F917 is disordered. The segment covering R782–A794 has biased composition (basic and acidic residues). 3 stretches are compositionally biased toward low complexity: residues E795–K812, S823–A841, and D848–S858. S890 bears the Phosphoserine mark. A compositionally biased stretch (polar residues) spans S908–F917. Positions Q911–F976 constitute an HP domain.

Belongs to the villin/gelsolin family. As to expression, expressed in all tissues examined. Mainly detected in the root epidermis and vasculature. Expressed in the root cap.

The protein localises to the cytoplasm. It is found in the cytoskeleton. Ca(2+)-regulated actin-binding protein. Involved in actin filaments bundling. Caps the barbed end of actin filaments and is able to sever them in a calcium-dependent manner. Required for the construction of actin collars in pollen tubes. Acts redundantly with VLN5 (AC Q9LVC6) to generate thick actin filament bundles and to regulate polarized pollen tube growth. Acts redundantly with VLN3 (AC O81645) to regulate directional organ growth and in sclerenchyma development. The chain is Villin-2 from Arabidopsis thaliana (Mouse-ear cress).